Here is a 1029-residue protein sequence, read N- to C-terminus: Toll-like receptor 9 (1029 aa).

An N-terminal signal peptide occupies residues 1–24; it reads MGPYCAPHPLSLLVQAAALAAALA. At 25 to 815 the chain is on the extracellular side; the sequence is EGTLPAFLPC…LCLDETLSLD (791 aa). A disulfide bond links C34 and C44. DNA is bound at residue 46–50; that stretch reads WLFLK. LRR repeat units follow at residues 61 to 84, 86 to 109, 121 to 146, 149 to 165, 166 to 189, 197 to 220, 222 to 241, 242 to 267, 282 to 305, 307 to 331, 332 to 355, 362 to 385, 389 to 412, 414 to 439, 469 to 492, 494 to 517, 518 to 541, 543 to 570, 572 to 596, 598 to 620, 625 to 648, 650 to 673, 674 to 697, 699 to 721, 722 to 745, and 747 to 770; these read RANV…DFVH, SNLR…HFPC, VPTL…SLVS, LSHT…FTGL, HALR…ALEV, LGNL…LPPS, DTLL…DLAN, LTAL…CREC, LSRL…WFRG, GRLQ…IFND, LTQL…HLHL, LVSL…TLQS, LPKL…IFGA, PSLL…LGEV, CNLN…MFTR, SRLQ…QFVP, LTSL…SFTE, PQLE…SFVA, LPSL…LSSA, LRAL…LYLC, LRNL…HLDN, PKSL…SLTV, LPRL…SLPP, IRLQ…FFVR, ATRL…WFGS, and AGTL…AFVD. N-linked (GlcNAc...) asparagine glycosylation is present at N63. DNA contacts are provided by residues 71 to 76 and 94 to 108; these read SNRIHH and KWNC…MHFP. A disulfide bridge links C97 with C109. N128 is a glycosylation site (N-linked (GlcNAc...) asparagine). Y131 contributes to the DNA binding site. C177 and C183 are joined by a disulfide. 178–180 contributes to the DNA binding site; it reads YYM. A glycan (N-linked (GlcNAc...) asparagine) is linked at N199. A DNA-binding site is contributed by Y207. N209 and N241 each carry an N-linked (GlcNAc...) asparagine glycan. 2 cysteine pairs are disulfide-bonded: C254-C267 and C257-C264. C257 carries the S-palmitoyl cysteine lipid modification. Residue R261 participates in DNA binding. Residue C264 is the site of S-palmitoyl cysteine attachment. 2 N-linked (GlcNAc...) asparagine glycosylation sites follow: N339 and N380. An intrachain disulfide couples C469 to C498. N-linked (GlcNAc...) asparagine glycans are attached at residues N472 and N511. N565 is a glycosylation site (N-linked (GlcNAc...) asparagine). N-linked (GlcNAc...) asparagine glycans are attached at residues N667 and N692. N729 carries N-linked (GlcNAc...) asparagine glycosylation. 2 disulfides stabilise this stretch: C762–C788 and C764–C807. The chain crosses the membrane as a helical span at residues 816–836; the sequence is CFGLSLLMVALGLAVPMLHHL. The Cytoplasmic portion of the chain corresponds to 837 to 1029; sequence CGWDLWYCFH…NFCRGPTTAE (193 aa). Positions 864–1009 constitute a TIR domain; the sequence is LLYDAVVVFD…SFWANLGIAL (146 aa).

The protein belongs to the Toll-like receptor family. Monomer and homodimer. Exists as a monomer in the absence of unmethylated cytidine-phosphate-guanosine (CpG) ligand. Proteolytic processing of an insertion loop (Z-loop) is required for homodimerization upon binding to the unmethylated CpG ligand leading to its activation. Interacts with MYD88 via their respective TIR domains. Interacts with BTK. Interacts (via transmembrane domain) with UNC93B1. Interacts with CD300LH; the interaction may promote full activation of TLR9-triggered innate responses. Interacts with CNPY3 and HSP90B1; this interaction is required for proper folding in the endoplasmic reticulum. Interacts with SMPDL3B. Interacts with CD82; this interaction is essential for TLR9-dependent myddosome formation in response to CpG stimulation. In terms of processing, activated by proteolytic cleavage of the flexible loop between repeats LRR14 and LRR15 within the ectodomain. Cleavage requires UNC93B1. Proteolytically processed by first removing the majority of the ectodomain by either asparagine endopeptidase (AEP) or a cathepsin followed by a trimming event that is solely cathepsin mediated and required for optimal receptor signaling. Palmitoylated by ZDHHC3 in the Golgi regulates TLR9 trafficking from the Golgi to endosomes. Depalmitoylation by PPT1 controls the release of TLR9 from UNC93B1 in endosomes.

The protein localises to the endoplasmic reticulum membrane. Its subcellular location is the endosome. It localises to the lysosome. The protein resides in the cytoplasmic vesicle. It is found in the phagosome. Its function is as follows. Key component of innate and adaptive immunity. TLRs (Toll-like receptors) control host immune response against pathogens through recognition of molecular patterns specific to microorganisms. TLR9 is a nucleotide-sensing TLR which is activated by unmethylated cytidine-phosphate-guanosine (CpG) dinucleotides. Acts via MYD88 and TRAF6, leading to NF-kappa-B activation, cytokine secretion and the inflammatory response. Upon CpG stimulation, induces B-cell proliferation, activation, survival and antibody production. This is Toll-like receptor 9 (TLR9) from Bos taurus (Bovine).